A 244-amino-acid chain; its full sequence is Lipoprotein-releasing system ATP-binding protein LolD (244 aa).

The 226-residue stretch at 19–244 folds into the ABC transporter domain; the sequence is IRAEALAKTY…KLRELAPSAV (226 aa). ATP is bound at residue 55-62; it reads GASGAGKS.

The protein belongs to the ABC transporter superfamily. Lipoprotein translocase (TC 3.A.1.125) family. The complex is composed of two ATP-binding proteins (LolD) and two transmembrane proteins (LolC and LolE).

Its subcellular location is the cell inner membrane. Functionally, part of the ABC transporter complex LolCDE involved in the translocation of mature outer membrane-directed lipoproteins, from the inner membrane to the periplasmic chaperone, LolA. Responsible for the formation of the LolA-lipoprotein complex in an ATP-dependent manner. This chain is Lipoprotein-releasing system ATP-binding protein LolD, found in Xanthomonas oryzae pv. oryzae (strain MAFF 311018).